Reading from the N-terminus, the 783-residue chain is Polyadenylate-binding protein, cytoplasmic and nuclear (783 aa).

Residues 16 to 65 (DLGNTSLGGGDNRAAPAINTNVAPGEYQTADPDTAGPTPSSAAPHPQSSA) form a disordered region. Residues 54–65 (PSSAAPHPQSSA) are compositionally biased toward low complexity. RRM domains lie at 65-143 (ASLY…WSQR), 153-230 (GNVF…YHIP), 246-323 (TNIY…RAQK), and 349-471 (VNLY…LAQR). Disordered regions lie at residues 381-428 (MRDA…KGDR), 596-671 (AAAL…AAGG), and 752-783 (VKSQQGPGQGPAPTQGEAEAEKPKEEKAEEKA). The segment covering 396-406 (GKDKENKKEGE) has biased composition (basic and acidic residues). Over residues 407-416 (QAAEAEGEAE) the composition is skewed to acidic residues. The span at 417-428 (GAEKKTEKKGDR) shows a compositional bias: basic and acidic residues. Gly residues predominate over residues 601-614 (NGRGGPGGPGGRGM). Over residues 630 to 641 (AGFPPNGRPQNG) the composition is skewed to low complexity. Positions 642–655 (NMGGRGGPGRGGNF) are enriched in gly residues. The span at 656-671 (AAGRGAPPAGPLAAGG) shows a compositional bias: low complexity. Residues 676–753 (SSLLQSQLTA…AMAVYDEYVK (78 aa)) enclose the PABC domain. Basic and acidic residues predominate over residues 770 to 783 (EAEKPKEEKAEEKA).

The protein belongs to the polyadenylate-binding protein type-1 family.

Its subcellular location is the cytoplasm. It localises to the nucleus. Functionally, binds the poly(A) tail of mRNA. Appears to be an important mediator of the multiple roles of the poly(A) tail in mRNA biogenesis, stability and translation. In the nucleus, involved in both mRNA cleavage and polyadenylation. Is also required for efficient mRNA export to the cytoplasm. Acts in concert with a poly(A)-specific nuclease (PAN) to affect poly(A) tail shortening, which may occur concomitantly with either nucleocytoplasmic mRNA transport or translational initiation. In the cytoplasm, stimulates translation initiation and regulates mRNA decay through translation termination-coupled poly(A) shortening, probably mediated by PAN. The chain is Polyadenylate-binding protein, cytoplasmic and nuclear (PAB1) from Chaetomium globosum (strain ATCC 6205 / CBS 148.51 / DSM 1962 / NBRC 6347 / NRRL 1970) (Soil fungus).